Here is a 248-residue protein sequence, read N- to C-terminus: MNDNRHRSKPPASLAPRDLAALIDISAVQAFHTEADVRELAEIAVAEGFIAAHALPNFVPLLRSLVPPGGPTLVGGPVGFPSGGHTTRMKIAEASELAEGGAQELDMMINVGRLKSGDIGYVRSEIRAVVEAIAPVPLKVILELAHLTDEEIRTASAIVAESGAAFVKTGTGWTPSATTLERLKLIAVTVEGAVEIKAAGGIRSLDAIAEMLRLGVTRFGINTQVAVDLVRQCAALPGSRLDIAGKAD.

The active-site Proton donor/acceptor is aspartate 106. Lysine 168 (schiff-base intermediate with acetaldehyde) is an active-site residue. Residue lysine 197 is the Proton donor/acceptor of the active site.

It belongs to the DeoC/FbaB aldolase family. DeoC type 1 subfamily.

The protein resides in the cytoplasm. It carries out the reaction 2-deoxy-D-ribose 5-phosphate = D-glyceraldehyde 3-phosphate + acetaldehyde. The protein operates within carbohydrate degradation; 2-deoxy-D-ribose 1-phosphate degradation; D-glyceraldehyde 3-phosphate and acetaldehyde from 2-deoxy-alpha-D-ribose 1-phosphate: step 2/2. In terms of biological role, catalyzes a reversible aldol reaction between acetaldehyde and D-glyceraldehyde 3-phosphate to generate 2-deoxy-D-ribose 5-phosphate. This Sinorhizobium medicae (strain WSM419) (Ensifer medicae) protein is Deoxyribose-phosphate aldolase.